Here is a 193-residue protein sequence, read N- to C-terminus: Xanthine phosphoribosyltransferase (193 aa).

Xanthine is bound by residues Leu-20 and Asn-27. 128–132 contributes to the 5-phospho-alpha-D-ribose 1-diphosphate binding site; that stretch reads ANGDA. Lys-156 contributes to the xanthine binding site.

The protein belongs to the purine/pyrimidine phosphoribosyltransferase family. Xpt subfamily. In terms of assembly, homodimer.

The protein resides in the cytoplasm. It catalyses the reaction XMP + diphosphate = xanthine + 5-phospho-alpha-D-ribose 1-diphosphate. It participates in purine metabolism; XMP biosynthesis via salvage pathway; XMP from xanthine: step 1/1. Functionally, converts the preformed base xanthine, a product of nucleic acid breakdown, to xanthosine 5'-monophosphate (XMP), so it can be reused for RNA or DNA synthesis. This chain is Xanthine phosphoribosyltransferase, found in Staphylococcus saprophyticus subsp. saprophyticus (strain ATCC 15305 / DSM 20229 / NCIMB 8711 / NCTC 7292 / S-41).